The sequence spans 452 residues: Elongation factor Tu, mitochondrial (452 aa).

Residues 1 to 43 (MAAATLLRATPRFSGLCASPTPFLQGRLRPLKAPASPFLCRGL) constitute a mitochondrion transit peptide. Residues 55 to 251 (KPHVNVGTIG…AVDTYIPVPT (197 aa)) form the tr-type G domain. The interval 64 to 71 (GHVDHGKT) is G1. GTP is bound by residues Asp-67, Gly-69, Lys-70, Thr-71, and Thr-72. Thr-71 serves as a coordination point for Mg(2+). Position 79 is an N6-acetyllysine (Lys-79). Lys-88 is modified (N6-acetyllysine; alternate). Lys-88 is subject to N6-succinyllysine; alternate. The G2 stretch occupies residues 105–109 (GITIN). The G3 stretch occupies residues 126 to 129 (DCPG). Residues Asn-181, Asp-184, Ser-219, Ala-220, and Leu-221 each contribute to the GTP site. A G4 region spans residues 181 to 184 (NKAD). Residues 219-221 (SAL) are G5. Lys-234 carries the post-translational modification N6-succinyllysine. Lys-256 is subject to N6-acetyllysine. At Thr-278 the chain carries Phosphothreonine. At Lys-286 the chain carries N6-succinyllysine. A Phosphoserine modification is found at Ser-312. An N6-acetyllysine mark is found at Lys-361 and Lys-418.

It belongs to the TRAFAC class translation factor GTPase superfamily. Classic translation factor GTPase family. EF-Tu/EF-1A subfamily. Interacts with NLRX1. Interacts with ATG16L1.

It localises to the mitochondrion. The enzyme catalyses GTP + H2O = GDP + phosphate + H(+). In terms of biological role, GTP hydrolase that promotes the GTP-dependent binding of aminoacyl-tRNA to the A-site of ribosomes during protein biosynthesis. Plays a role in the regulation of autophagy and innate immunity. Recruits ATG5-ATG12 and NLRX1 at mitochondria and serves as a checkpoint of the RIGI-MAVS pathway. In turn, inhibits RLR-mediated type I interferon while promoting autophagy. This Rattus norvegicus (Rat) protein is Elongation factor Tu, mitochondrial.